Consider the following 507-residue polypeptide: UDP-N-acetylglucosamine 1-carboxyvinyltransferase 1 (507 aa).

Residue Lys-41–Asn-42 participates in phosphoenolpyruvate binding. Arg-112 lines the UDP-N-acetyl-alpha-D-glucosamine pocket. Cys-136 functions as the Proton donor in the catalytic mechanism. Position 136 is a 2-(S-cysteinyl)pyruvic acid O-phosphothioketal (Cys-136). Residues Arg-141–Leu-145, Asp-328, and Leu-350 contribute to the UDP-N-acetyl-alpha-D-glucosamine site.

This sequence belongs to the EPSP synthase family. MurA subfamily.

It localises to the cytoplasm. The catalysed reaction is phosphoenolpyruvate + UDP-N-acetyl-alpha-D-glucosamine = UDP-N-acetyl-3-O-(1-carboxyvinyl)-alpha-D-glucosamine + phosphate. It participates in cell wall biogenesis; peptidoglycan biosynthesis. In terms of biological role, cell wall formation. Adds enolpyruvyl to UDP-N-acetylglucosamine. The sequence is that of UDP-N-acetylglucosamine 1-carboxyvinyltransferase 1 from Legionella pneumophila (strain Lens).